A 135-amino-acid chain; its full sequence is MFLRTQARFFHATTKKMDFSKMSIVGRIGSEFTEHTSANNNRYLKYSIASQPRRDGQTNWYNITVFNEPQINFLTEYVRKGALVYVEADAANYVFERDDGSKGTTLSLVQKDINLLKNGKKLEDAEGQENAASSE.

The N-terminal 17 residues, 1-17 (MFLRTQARFFHATTKKM), are a transit peptide targeting the mitochondrion. Residues 19-117 (FSKMSIVGRI…LVQKDINLLK (99 aa)) enclose the SSB domain.

In terms of assembly, homotetramer. Interacts with PIF1.

It localises to the mitochondrion. This protein binds preferentially and cooperatively to single-stranded DNA (ssDNS). Involved in mitochondrial DNA replication. Stimulates PIF1 helicase activity. The chain is Single-stranded DNA-binding protein RIM1, mitochondrial (RIM1) from Saccharomyces cerevisiae (strain ATCC 204508 / S288c) (Baker's yeast).